Here is a 61-residue protein sequence, read N- to C-terminus: Large ribosomal subunit protein eL37 (61 aa).

Residues cysteine 19, cysteine 22, cysteine 34, and cysteine 37 each coordinate Zn(2+). The C4-type zinc finger occupies 19 to 37; that stretch reads CRRCGRNSFNVRKGYCAAC.

This sequence belongs to the eukaryotic ribosomal protein eL37 family. Zn(2+) serves as cofactor.

Its function is as follows. Binds to the 23S rRNA. The chain is Large ribosomal subunit protein eL37 (rpl37e) from Sulfurisphaera tokodaii (strain DSM 16993 / JCM 10545 / NBRC 100140 / 7) (Sulfolobus tokodaii).